The following is a 32-amino-acid chain: ilv operon leader peptide (32 aa).

This is ilv operon leader peptide (ilvL) from Yersinia pestis.